The chain runs to 210 residues: LexA repressor (210 aa).

Residues 31–51 (RVEISKELGFRSPNAAEEHLK) constitute a DNA-binding region (H-T-H motif). Residues Ser126 and Lys163 each act as for autocatalytic cleavage activity in the active site.

This sequence belongs to the peptidase S24 family. Homodimer.

The enzyme catalyses Hydrolysis of Ala-|-Gly bond in repressor LexA.. In terms of biological role, represses a number of genes involved in the response to DNA damage (SOS response), including recA and lexA. In the presence of single-stranded DNA, RecA interacts with LexA causing an autocatalytic cleavage which disrupts the DNA-binding part of LexA, leading to derepression of the SOS regulon and eventually DNA repair. The protein is LexA repressor of Histophilus somni (strain 129Pt) (Haemophilus somnus).